A 366-amino-acid chain; its full sequence is Beta sliding clamp (366 aa).

It belongs to the beta sliding clamp family. In terms of assembly, forms a ring-shaped head-to-tail homodimer around DNA which binds and tethers DNA polymerases and other proteins to the DNA. The DNA replisome complex has a single clamp-loading complex (3 tau and 1 each of delta, delta', psi and chi subunits) which binds 3 Pol III cores (1 core on the leading strand and 2 on the lagging strand) each with a beta sliding clamp dimer. Additional proteins in the replisome are other copies of gamma, psi and chi, Ssb, DNA helicase and RNA primase.

The protein localises to the cytoplasm. Functionally, confers DNA tethering and processivity to DNA polymerases and other proteins. Acts as a clamp, forming a ring around DNA (a reaction catalyzed by the clamp-loading complex) which diffuses in an ATP-independent manner freely and bidirectionally along dsDNA. Initially characterized for its ability to contact the catalytic subunit of DNA polymerase III (Pol III), a complex, multichain enzyme responsible for most of the replicative synthesis in bacteria; Pol III exhibits 3'-5' exonuclease proofreading activity. The beta chain is required for initiation of replication as well as for processivity of DNA replication. This Buchnera aphidicola subsp. Rhopalosiphum padi protein is Beta sliding clamp (dnaN).